Reading from the N-terminus, the 157-residue chain is Transcriptional repressor NrdR (157 aa).

A disordered region spans residues 1-21 (MKCPNCHKNGSRVVDSRPADN). A zinc finger spans residues 3 to 34 (CPNCHKNGSRVVDSRPADNGHAIRRRRECEQC). In terms of domain architecture, ATP-cone spans 49–139 (LLVIKKNGTR…VYREFKDMHA (91 aa)).

The protein belongs to the NrdR family. Requires Zn(2+) as cofactor.

Its function is as follows. Negatively regulates transcription of bacterial ribonucleotide reductase nrd genes and operons by binding to NrdR-boxes. The sequence is that of Transcriptional repressor NrdR from Ligilactobacillus salivarius (strain UCC118) (Lactobacillus salivarius).